Here is an 813-residue protein sequence, read N- to C-terminus: Leucine--tRNA ligase (813 aa).

The short motif at 41-51 (PYPSGTLHMGH) is the 'HIGH' region element. Residues 575-579 (KMSKS) carry the 'KMSKS' region motif. Residue Lys-578 coordinates ATP.

It belongs to the class-I aminoacyl-tRNA synthetase family.

It is found in the cytoplasm. The enzyme catalyses tRNA(Leu) + L-leucine + ATP = L-leucyl-tRNA(Leu) + AMP + diphosphate. The chain is Leucine--tRNA ligase from Francisella tularensis subsp. tularensis (strain WY96-3418).